The sequence spans 1027 residues: 2-oxoglutarate dehydrogenase, mitochondrial (1027 aa).

Arg315, Asp413, Asn446, Ile448, and Gln674 together coordinate thiamine diphosphate. Asp413, Asn446, and Ile448 together coordinate Mg(2+).

The protein belongs to the alpha-ketoglutarate dehydrogenase family. In terms of assembly, homodimer. Component of the 2-oxoglutarate dehydrogenase complex. Thiamine diphosphate serves as cofactor. It depends on Mg(2+) as a cofactor.

It is found in the mitochondrion matrix. It catalyses the reaction N(6)-[(R)-lipoyl]-L-lysyl-[protein] + 2-oxoglutarate + H(+) = N(6)-[(R)-S(8)-succinyldihydrolipoyl]-L-lysyl-[protein] + CO2. Functionally, the 2-oxoglutarate dehydrogenase complex catalyzes the overall conversion of 2-oxoglutarate to succinyl-CoA and CO(2). It contains multiple copies of three enzymatic components: 2-oxoglutarate dehydrogenase (E1), dihydrolipoamide succinyltransferase (E2) and lipoamide dehydrogenase (E3). This chain is 2-oxoglutarate dehydrogenase, mitochondrial (ogdh-1), found in Caenorhabditis briggsae.